Consider the following 183-residue polypeptide: MKNVTHSFVFLAHWPFAGSFGLNTDILATNLINLTVVVGVLIFFGKGVLKDLLDNRKQRILSTIRNSEELRRGTLEQLEKARIRLQKVELEADEYRMNGYSEIEREKENLINATSISLEQLEKSKNETLYFEKQRAMNQVRQRVFQQAVQGALGTLNSCLNTELHFRTIRANIGILGAIEWKR.

A helical membrane pass occupies residues 25 to 45 (DILATNLINLTVVVGVLIFFG).

The protein belongs to the ATPase B chain family. As to quaternary structure, F-type ATPases have 2 components, F(1) - the catalytic core - and F(0) - the membrane proton channel. F(1) has five subunits: alpha(3), beta(3), gamma(1), delta(1), epsilon(1). F(0) has four main subunits: a(1), b(1), b'(1) and c(10-14). The alpha and beta chains form an alternating ring which encloses part of the gamma chain. F(1) is attached to F(0) by a central stalk formed by the gamma and epsilon chains, while a peripheral stalk is formed by the delta, b and b' chains.

It localises to the plastid. The protein localises to the chloroplast thylakoid membrane. F(1)F(0) ATP synthase produces ATP from ADP in the presence of a proton or sodium gradient. F-type ATPases consist of two structural domains, F(1) containing the extramembraneous catalytic core and F(0) containing the membrane proton channel, linked together by a central stalk and a peripheral stalk. During catalysis, ATP synthesis in the catalytic domain of F(1) is coupled via a rotary mechanism of the central stalk subunits to proton translocation. Its function is as follows. Component of the F(0) channel, it forms part of the peripheral stalk, linking F(1) to F(0). The protein is ATP synthase subunit b, chloroplastic of Saccharum hybrid (Sugarcane).